A 338-amino-acid polypeptide reads, in one-letter code: Ketol-acid reductoisomerase (NADP(+)) (338 aa).

The KARI N-terminal Rossmann domain maps to 1 to 181 (MQVYYDKDCD…GGGRTGIIET (181 aa)). Residues 24 to 27 (YGSQ), Arg-47, Ser-50, Ser-52, and 82 to 85 (DEFQ) contribute to the NADP(+) site. His-107 is an active-site residue. Position 133 (Gly-133) interacts with NADP(+). Positions 182–327 (TFKDETETDL…EKLRSMMPWI (146 aa)) constitute a KARI C-terminal knotted domain. Residues Asp-190, Glu-194, Glu-226, and Glu-230 each coordinate Mg(2+). Ser-251 is a binding site for substrate.

This sequence belongs to the ketol-acid reductoisomerase family. The cofactor is Mg(2+).

The catalysed reaction is (2R)-2,3-dihydroxy-3-methylbutanoate + NADP(+) = (2S)-2-acetolactate + NADPH + H(+). The enzyme catalyses (2R,3R)-2,3-dihydroxy-3-methylpentanoate + NADP(+) = (S)-2-ethyl-2-hydroxy-3-oxobutanoate + NADPH + H(+). The protein operates within amino-acid biosynthesis; L-isoleucine biosynthesis; L-isoleucine from 2-oxobutanoate: step 2/4. It participates in amino-acid biosynthesis; L-valine biosynthesis; L-valine from pyruvate: step 2/4. In terms of biological role, involved in the biosynthesis of branched-chain amino acids (BCAA). Catalyzes an alkyl-migration followed by a ketol-acid reduction of (S)-2-acetolactate (S2AL) to yield (R)-2,3-dihydroxy-isovalerate. In the isomerase reaction, S2AL is rearranged via a Mg-dependent methyl migration to produce 3-hydroxy-3-methyl-2-ketobutyrate (HMKB). In the reductase reaction, this 2-ketoacid undergoes a metal-dependent reduction by NADPH to yield (R)-2,3-dihydroxy-isovalerate. This Hahella chejuensis (strain KCTC 2396) protein is Ketol-acid reductoisomerase (NADP(+)).